A 441-amino-acid polypeptide reads, in one-letter code: Proline--tRNA ligase (441 aa).

This sequence belongs to the class-II aminoacyl-tRNA synthetase family. ProS type 2 subfamily. As to quaternary structure, homodimer.

The protein resides in the cytoplasm. The catalysed reaction is tRNA(Pro) + L-proline + ATP = L-prolyl-tRNA(Pro) + AMP + diphosphate. Catalyzes the attachment of proline to tRNA(Pro) in a two-step reaction: proline is first activated by ATP to form Pro-AMP and then transferred to the acceptor end of tRNA(Pro). The protein is Proline--tRNA ligase of Afipia carboxidovorans (strain ATCC 49405 / DSM 1227 / KCTC 32145 / OM5) (Oligotropha carboxidovorans).